An 865-amino-acid polypeptide reads, in one-letter code: MGKALVIVESPAKAKTINKYLGSDYVVKSSVGHIRDLPTSGSAAKKSADSTSTKTAKKPKKDERGALVNRMGVDPWHNWEAHYEVLPGKEKVVSELKQLAEKADHIYLATDLDREGEAIAWHLREVIGGDDARYSRVVFNEITKNAIRQAFNKPGELNIDRVNAQQARRFMDRVVGYMVSPLLWKKIARGLSAGRVQSVAVRLVVEREREIKAFVPEEFWEVDASTTTPSGEALALQVTHQNDKPFRPVNKEQTQAAVSLLEKARYSVLEREDKPTTSKPGAPFITSTLQQAASTRLGFGVKKTMMMAQRLYEAGYITYMRTDSTNLSQDAVNMVRGYISDNFGKKYLPESPNQYASKENSQEAHEAIRPSDVNVMAESLKDMEADAQKLYQLIWRQFVACQMTPAKYDSTTLTVGAGDFRLKARGRILRFDGWTKVMPALRKGDEDRILPAVNKGDALTLVELTPAQHFTKPPARFSEASLVKELEKRGIGRPSTYASIISTIQDRGYVRVENRRFYAEKMGEIVTDRLEENFRELMNYDFTAQMENSLDQVANHEAEWKAVLDHFFSDFTQQLDKAEKDPEEGGMRPNQMVLTSIDCPTCGRKMGIRTASTGVFLGCSGYALPPKERCKTTINLVPENEVLNVLEGEDAETNALRAKRRCPKCGTAMDSYLIDPKRKLHVCGNNPTCDGYEIEEGEFRIKGYDGPIVECEKCGSEMHLKMGRFGKYMACTNEECKNTRKILRNGEVAPPKEDPVPLPELPCEKSDAYFVLRDGAAGVFLAANTFPKSRETRAPLVEELYRFRDRLPEKLRYLADAPQQDPEGNKTMVRFSRKTKQQYVSSEKDGKATGWSAFYVDGKWVEGKK.

In terms of domain architecture, Toprim spans Lys-3–Ile-142. Glu-9 contributes to the Mg(2+) binding site. Positions Leu-37 to Gly-65 are disordered. The segment covering Thr-39–Lys-54 has biased composition (low complexity). Position 111 (Asp-111) interacts with Mg(2+). Positions Asn-158–Leu-575 constitute a Topo IA-type catalytic domain. Residues Ser-192 to Gln-197 form an interaction with DNA region. The O-(5'-phospho-DNA)-tyrosine intermediate role is filled by Tyr-319. C4-type zinc fingers lie at residues Cys-599–Cys-630, Cys-662–Cys-689, and Cys-711–Cys-736.

This sequence belongs to the type IA topoisomerase family. As to quaternary structure, monomer. It depends on Mn(2+) as a cofactor. The cofactor is Ca(2+).

The catalysed reaction is ATP-independent breakage of single-stranded DNA, followed by passage and rejoining.. Its function is as follows. Releases the supercoiling and torsional tension of DNA, which is introduced during the DNA replication and transcription, by transiently cleaving and rejoining one strand of the DNA duplex. Introduces a single-strand break via transesterification at a target site in duplex DNA. The scissile phosphodiester is attacked by the catalytic tyrosine of the enzyme, resulting in the formation of a DNA-(5'-phosphotyrosyl)-enzyme intermediate and the expulsion of a 3'-OH DNA strand. The free DNA strand then undergoes passage around the unbroken strand, thus removing DNA supercoils. Finally, in the religation step, the DNA 3'-OH attacks the covalent intermediate to expel the active-site tyrosine and restore the DNA phosphodiester backbone. The sequence is that of DNA topoisomerase 1 from Escherichia coli (strain K12).